Reading from the N-terminus, the 753-residue chain is 5-methyltetrahydropteroyltriglutamate--homocysteine methyltransferase (753 aa).

5-methyltetrahydropteroyltri-L-glutamate-binding positions include 17 to 20 (RELK) and Lys117. L-homocysteine is bound by residues 431–433 (IGS) and Glu484. L-methionine-binding positions include 431-433 (IGS) and Glu484. Residues 515–516 (RC) and Trp561 contribute to the 5-methyltetrahydropteroyltri-L-glutamate site. An L-homocysteine-binding site is contributed by Asp599. Asp599 provides a ligand contact to L-methionine. Glu605 contacts 5-methyltetrahydropteroyltri-L-glutamate. Zn(2+)-binding residues include His641, Cys643, and Glu665. His694 serves as the catalytic Proton donor. Residue Cys726 participates in Zn(2+) binding.

It belongs to the vitamin-B12 independent methionine synthase family. Requires Zn(2+) as cofactor.

The enzyme catalyses 5-methyltetrahydropteroyltri-L-glutamate + L-homocysteine = tetrahydropteroyltri-L-glutamate + L-methionine. It participates in amino-acid biosynthesis; L-methionine biosynthesis via de novo pathway; L-methionine from L-homocysteine (MetE route): step 1/1. Catalyzes the transfer of a methyl group from 5-methyltetrahydrofolate to homocysteine resulting in methionine formation. In Klebsiella pneumoniae (strain 342), this protein is 5-methyltetrahydropteroyltriglutamate--homocysteine methyltransferase.